A 983-amino-acid polypeptide reads, in one-letter code: Chaperone protein ClpB3, mitochondrial (983 aa).

The N-terminal 87 residues, Met-1–Tyr-87, are a transit peptide targeting the mitochondrion. A Clp R domain is found at Pro-97–Ser-240. Repeat stretches follow at residues Phe-100 to Gln-165 and Ile-177 to Ser-240. The segment at Leu-255 to Pro-503 is i. Position 300 to 307 (Gly-300 to Thr-307) interacts with ATP. Residues Ile-504–Glu-627 adopt a coiled-coil conformation. An II region spans residues Val-629–Ser-820. Gly-703 to Thr-710 contacts ATP.

It belongs to the ClpA/ClpB family.

It is found in the mitochondrion. Molecular chaperone that may not be involved in heat stress response or tolerance. The sequence is that of Chaperone protein ClpB3, mitochondrial (CLPB3) from Oryza sativa subsp. japonica (Rice).